The following is a 238-amino-acid chain: Monocyte to macrophage differentiation factor (238 aa).

Topologically, residues 1–28 (MRFRNRFQRFMNHRAPANGRYKPTCYEH) are cytoplasmic. The chain crosses the membrane as a helical span at residues 29–49 (AANCYTHAFLIVPAIVGSALL). Topologically, residues 50–61 (HRLSDDCWEKIT) are lumenal. The chain crosses the membrane as a helical span at residues 62-82 (AWIYGMGLCALFIVSTVFHIV). The Cytoplasmic segment spans residues 83–101 (SWKKSHLRTVEHCFHMCDR). Residues 102–122 (MVIYFFIAASYAPWLNLRELG) form a helical membrane-spanning segment. Position 123 (Pro123) is a topological domain, lumenal. A helical transmembrane segment spans residues 124-144 (LASHMRWFIWLMAAGGTIYVF). Over 145-151 (LYHEKYK) the chain is Cytoplasmic. The chain crosses the membrane as a helical span at residues 152-172 (VVELFFYLTMGFSPALVVTSM). Topologically, residues 173–174 (NN) are lumenal. A helical transmembrane segment spans residues 175–195 (TDGLQELACGGLIYCLGVVFF). The Cytoplasmic segment spans residues 196-198 (KSD). The chain crosses the membrane as a helical span at residues 199-219 (GIIPFAHAIWHLFVATAAAVH). Residues 220 to 238 (YYAIWKYLYRSPTDFIRHL) lie on the Lumenal side of the membrane.

It belongs to the ADIPOR family.

Its subcellular location is the late endosome membrane. It localises to the lysosome membrane. Involved in the dynamics of lysosomal membranes associated with microglial activation following brain lesion. The sequence is that of Monocyte to macrophage differentiation factor from Mus musculus (Mouse).